We begin with the raw amino-acid sequence, 359 residues long: Probable dual-specificity RNA methyltransferase RlmN (359 aa).

The Proton acceptor role is filled by E93. Residues K107–D337 enclose the Radical SAM core domain. The cysteines at positions 114 and 342 are disulfide-linked. [4Fe-4S] cluster-binding residues include C121, C125, and C128. S-adenosyl-L-methionine contacts are provided by residues G168–E169, S200, S223–H225, and N299. C342 (S-methylcysteine intermediate) is an active-site residue.

It belongs to the radical SAM superfamily. RlmN family. [4Fe-4S] cluster is required as a cofactor.

The protein localises to the cytoplasm. The enzyme catalyses adenosine(2503) in 23S rRNA + 2 reduced [2Fe-2S]-[ferredoxin] + 2 S-adenosyl-L-methionine = 2-methyladenosine(2503) in 23S rRNA + 5'-deoxyadenosine + L-methionine + 2 oxidized [2Fe-2S]-[ferredoxin] + S-adenosyl-L-homocysteine. It catalyses the reaction adenosine(37) in tRNA + 2 reduced [2Fe-2S]-[ferredoxin] + 2 S-adenosyl-L-methionine = 2-methyladenosine(37) in tRNA + 5'-deoxyadenosine + L-methionine + 2 oxidized [2Fe-2S]-[ferredoxin] + S-adenosyl-L-homocysteine. Functionally, specifically methylates position 2 of adenine 2503 in 23S rRNA and position 2 of adenine 37 in tRNAs. In Akkermansia muciniphila (strain ATCC BAA-835 / DSM 22959 / JCM 33894 / BCRC 81048 / CCUG 64013 / CIP 107961 / Muc), this protein is Probable dual-specificity RNA methyltransferase RlmN.